The chain runs to 375 residues: Queuine tRNA-ribosyltransferase (375 aa).

The active-site Proton acceptor is the aspartate 89. Substrate is bound by residues 89–93 (DSGGF), aspartate 143, glutamine 187, and glycine 214. The RNA binding stretch occupies residues 245–251 (GVGKPED). Aspartate 264 (nucleophile) is an active-site residue. An RNA binding; important for wobble base 34 recognition region spans residues 269–273 (TRNAR). Positions 302, 304, 307, and 333 each coordinate Zn(2+).

It belongs to the queuine tRNA-ribosyltransferase family. In terms of assembly, homodimer. Within each dimer, one monomer is responsible for RNA recognition and catalysis, while the other monomer binds to the replacement base PreQ1. It depends on Zn(2+) as a cofactor.

It carries out the reaction 7-aminomethyl-7-carbaguanine + guanosine(34) in tRNA = 7-aminomethyl-7-carbaguanosine(34) in tRNA + guanine. Its pathway is tRNA modification; tRNA-queuosine biosynthesis. In terms of biological role, catalyzes the base-exchange of a guanine (G) residue with the queuine precursor 7-aminomethyl-7-deazaguanine (PreQ1) at position 34 (anticodon wobble position) in tRNAs with GU(N) anticodons (tRNA-Asp, -Asn, -His and -Tyr). Catalysis occurs through a double-displacement mechanism. The nucleophile active site attacks the C1' of nucleotide 34 to detach the guanine base from the RNA, forming a covalent enzyme-RNA intermediate. The proton acceptor active site deprotonates the incoming PreQ1, allowing a nucleophilic attack on the C1' of the ribose to form the product. After dissociation, two additional enzymatic reactions on the tRNA convert PreQ1 to queuine (Q), resulting in the hypermodified nucleoside queuosine (7-(((4,5-cis-dihydroxy-2-cyclopenten-1-yl)amino)methyl)-7-deazaguanosine). This chain is Queuine tRNA-ribosyltransferase, found in Shigella flexneri serotype 5b (strain 8401).